The chain runs to 29 residues: Cycloviolacin-H2 (29 aa).

A cross-link (cyclopeptide (Ser-Asn)) is located at residues 1-29; the sequence is SAIACGESCVYIPCFIPGCSCRNRVCYLN. 3 disulfide bridges follow: Cys5–Cys19, Cys9–Cys21, and Cys14–Cys26.

In terms of processing, this is a cyclic peptide.

In terms of biological role, probably participates in a plant defense mechanism. This chain is Cycloviolacin-H2, found in Viola hederacea (Australian violet).